We begin with the raw amino-acid sequence, 254 residues long: uncharacterized protein (254 aa).

Positions 14-81 constitute an S4 RNA-binding domain; that stretch reads IRLQKVLSQA…DSLVYLALNK (68 aa). Asp119 functions as the Nucleophile in the catalytic mechanism.

It belongs to the pseudouridine synthase RsuA family.

The enzyme catalyses a uridine in RNA = a pseudouridine in RNA. This is an uncharacterized protein from Mycobacterium bovis (strain ATCC BAA-935 / AF2122/97).